Consider the following 493-residue polypeptide: Trans-aconitate decarboxylase 1 (493 aa).

The segment at 1 to 22 (MAPALNANPTTKRDELSAPSAS) is disordered.

Belongs to the class-II fumarase/aspartase family.

It is found in the cytoplasm. The protein localises to the cytosol. The protein resides in the nucleus. It carries out the reaction trans-aconitate + H(+) = itaconate + CO2. The protein operates within secondary metabolite biosynthesis. Trans-aconitate decarboxylase; part of the gene cluster that mediates the biosynthesis of itaconic acid and 2-hydroxyparaconate. Cis-aconitate is secreted by the mitochondrial tricarboxylate transporter MTT1. In the cytosol cis-aconitate is converted into trans-aconitate via isomerization by the aconitate-delta-isomerase ADI1. Decarboxylation of trans-aconitate by the trans-aconitate decarboxylase TAD1 then leads then to the production of itaconic acid. The cytochrome P450 monooxygenase CYP3 further converts itaconate to 2-hydroxyparaconate via oxidation of the double bond, leading to a transient epoxide, which can subsequently be lactonized to produce 2-hydroxyparaconate. Secretion of itaconate and possibly 2-hydroxyparaconate into the medium is mediated by the major facilitator ITP1. The glyoxalase domain-containing protein RDO1 is not involved in the biosynthesis of itaconate and 2-hydroxyparaconate, however, it might play a role in the further conversion of 2-hydroxyparaconate to itatartarate. In Mycosarcoma maydis (Corn smut fungus), this protein is Trans-aconitate decarboxylase 1.